Here is a 148-residue protein sequence, read N- to C-terminus: SUMO-conjugating enzyme UBC9 (148 aa).

In terms of domain architecture, UBC core spans 1-147; the sequence is MASKRILKEL…ARTWTQKYAM (147 aa). C85 (glycyl thioester intermediate) is an active-site residue.

This sequence belongs to the ubiquitin-conjugating enzyme family. Interacts with CHIP. In terms of tissue distribution, highest expression in young stems and old leaves. Lowest levels in floral buds, anthers and young leaves.

The protein operates within protein modification; protein sumoylation. Its function is as follows. Accepts the ubiquitin-like protein SUMO/SMT3 from the E1 complex and catalyzes its covalent attachment to other proteins. Mediates the selective degradation of short-lived and abnormal proteins. This is SUMO-conjugating enzyme UBC9 (UBC9) from Arabidopsis thaliana (Mouse-ear cress).